A 75-amino-acid polypeptide reads, in one-letter code: Large ribosomal subunit protein bL31 (75 aa).

It belongs to the bacterial ribosomal protein bL31 family. Type A subfamily. In terms of assembly, part of the 50S ribosomal subunit.

Functionally, binds the 23S rRNA. The chain is Large ribosomal subunit protein bL31 from Chlorobaculum tepidum (strain ATCC 49652 / DSM 12025 / NBRC 103806 / TLS) (Chlorobium tepidum).